A 611-amino-acid chain; its full sequence is DNA mismatch repair protein MutL (611 aa).

Residues 364 to 384 (NVNSKPSKYRPATSPTVPKYT) form a disordered region.

Belongs to the DNA mismatch repair MutL/HexB family.

Its function is as follows. This protein is involved in the repair of mismatches in DNA. It is required for dam-dependent methyl-directed DNA mismatch repair. May act as a 'molecular matchmaker', a protein that promotes the formation of a stable complex between two or more DNA-binding proteins in an ATP-dependent manner without itself being part of a final effector complex. The sequence is that of DNA mismatch repair protein MutL from Rickettsia bellii (strain OSU 85-389).